The following is a 75-amino-acid chain: Small ribosomal subunit protein bS18 (75 aa).

It belongs to the bacterial ribosomal protein bS18 family. As to quaternary structure, part of the 30S ribosomal subunit. Forms a tight heterodimer with protein bS6.

Its function is as follows. Binds as a heterodimer with protein bS6 to the central domain of the 16S rRNA, where it helps stabilize the platform of the 30S subunit. The sequence is that of Small ribosomal subunit protein bS18 from Acinetobacter baylyi (strain ATCC 33305 / BD413 / ADP1).